Consider the following 179-residue polypeptide: Peroxiredoxin (179 aa).

A Thioredoxin domain is found at 2–152; it reads TMEKQVPIVT…VEGWFEEEGF (151 aa). The Cysteine sulfenic acid (-SOH) intermediate (for peroxiredoxin activity) role is filled by cysteine 56.

It belongs to the peroxiredoxin family. Prx5 subfamily. Monomer.

The enzyme catalyses a hydroperoxide + 2 glutathione = an alcohol + glutathione disulfide + H2O. Its function is as follows. Thiol-specific peroxidase that catalyzes the reduction of hydrogen peroxide and organic hydroperoxides to water and alcohols, respectively. Plays a role in cell protection against oxidative stress by detoxifying peroxides. The chain is Peroxiredoxin from Rhizobium etli.